The primary structure comprises 562 residues: Potassium-transporting ATPase potassium-binding subunit (562 aa).

The next 12 membrane-spanning stretches (helical) occupy residues 6–26, 62–82, 132–152, 175–195, 253–273, 283–303, 327–347, 356–376, 379–399, 416–436, 483–503, and 524–544; these read FLLI…LGGF, YALA…VLLM, GLTV…FALI, LYVL…QGVL, FVQM…FGQV, LIWA…YAEL, FGIL…CGAV, ALGG…FGGV, GLYG…LMIG, MTAL…ALAL, LLLA…VLAI, and GLLF…LTFI.

This sequence belongs to the KdpA family. As to quaternary structure, the system is composed of three essential subunits: KdpA, KdpB and KdpC.

Its subcellular location is the cell inner membrane. Functionally, part of the high-affinity ATP-driven potassium transport (or Kdp) system, which catalyzes the hydrolysis of ATP coupled with the electrogenic transport of potassium into the cytoplasm. This subunit binds the periplasmic potassium ions and delivers the ions to the membrane domain of KdpB through an intramembrane tunnel. This is Potassium-transporting ATPase potassium-binding subunit from Yersinia pestis bv. Antiqua (strain Antiqua).